The chain runs to 257 residues: MTKTIKEINRLLEAISELSDPYFIELESDDRVGVKKAVNKRRKAIQAMVDEELRLDKMLSYEKVLYQEGFSLIAGIDEVGRGPLAGPVVAACVILPIDCKIKGLNDSKKIPKSKHLSIFQAIQERALGIGIGIVDNHVIDDINIYQATKVAMIEAIKNIKGDVTEPDYLLIDAMTLETPIPQQSIIKGDANSMSIAAASIVAKVTRDRLMMDYEKAFPGYDFAKNAGYGTTSHLNGLKQFGVTPIHRTSFEPIKSML.

Residues 71–257 form the RNase H type-2 domain; sequence SLIAGIDEVG…TSFEPIKSML (187 aa). Aspartate 77, glutamate 78, and aspartate 172 together coordinate a divalent metal cation.

Belongs to the RNase HII family. Mn(2+) serves as cofactor. The cofactor is Mg(2+).

The protein resides in the cytoplasm. The catalysed reaction is Endonucleolytic cleavage to 5'-phosphomonoester.. Endonuclease that specifically degrades the RNA of RNA-DNA hybrids. This Streptococcus uberis (strain ATCC BAA-854 / 0140J) protein is Ribonuclease HII.